The sequence spans 243 residues: tRNA (guanine-N(1)-)-methyltransferase (243 aa).

S-adenosyl-L-methionine is bound by residues G108 and 127-132 (LGDFVL).

Belongs to the RNA methyltransferase TrmD family. In terms of assembly, homodimer.

Its subcellular location is the cytoplasm. The catalysed reaction is guanosine(37) in tRNA + S-adenosyl-L-methionine = N(1)-methylguanosine(37) in tRNA + S-adenosyl-L-homocysteine + H(+). Its function is as follows. Specifically methylates guanosine-37 in various tRNAs. In Streptococcus equi subsp. zooepidemicus (strain MGCS10565), this protein is tRNA (guanine-N(1)-)-methyltransferase.